Here is a 122-residue protein sequence, read N- to C-terminus: Holo-[acyl-carrier-protein] synthase (122 aa).

2 residues coordinate Mg(2+): D8 and E56.

The protein belongs to the P-Pant transferase superfamily. AcpS family. Requires Mg(2+) as cofactor.

The protein localises to the cytoplasm. The catalysed reaction is apo-[ACP] + CoA = holo-[ACP] + adenosine 3',5'-bisphosphate + H(+). In terms of biological role, transfers the 4'-phosphopantetheine moiety from coenzyme A to a Ser of acyl-carrier-protein. The polypeptide is Holo-[acyl-carrier-protein] synthase (Salinispora arenicola (strain CNS-205)).